Reading from the N-terminus, the 141-residue chain is Nucleoside diphosphate kinase (141 aa).

ATP-binding residues include K11, F59, R87, T93, R104, and N114. The Pros-phosphohistidine intermediate role is filled by H117.

This sequence belongs to the NDK family. In terms of assembly, homotetramer. Requires Mg(2+) as cofactor.

The protein resides in the cytoplasm. The enzyme catalyses a 2'-deoxyribonucleoside 5'-diphosphate + ATP = a 2'-deoxyribonucleoside 5'-triphosphate + ADP. It carries out the reaction a ribonucleoside 5'-diphosphate + ATP = a ribonucleoside 5'-triphosphate + ADP. Major role in the synthesis of nucleoside triphosphates other than ATP. The ATP gamma phosphate is transferred to the NDP beta phosphate via a ping-pong mechanism, using a phosphorylated active-site intermediate. The protein is Nucleoside diphosphate kinase of Polynucleobacter necessarius subsp. necessarius (strain STIR1).